Reading from the N-terminus, the 242-residue chain is Hairy and enhancer of split-related protein HELT (242 aa).

The 56-residue stretch at 10–65 (RTPVSHKVIEKRRRDRINRCLNELGKTVPMALAKQSSGKLEKAEILEMTVQYLRAL) folds into the bHLH domain. Lysine 48 carries the post-translational modification N6-acetyllysine. Positions 87-122 (FHYGYHECMKNLVHYLTTVERMETKDTKYARILAFL) constitute an Orange domain.

This sequence belongs to the HEY family. As to quaternary structure, self-associates. Interacts with HES5 and HEY2.

It is found in the nucleus. In terms of biological role, transcriptional repressor which binds preferentially to the canonical E box sequence 5'-CACGCG-3'. This is Hairy and enhancer of split-related protein HELT (HELT) from Homo sapiens (Human).